Here is a 532-residue protein sequence, read N- to C-terminus: Vesicular acetylcholine transporter (532 aa).

At 1-33 the chain is on the cytoplasmic side; that stretch reads MESAEPAGQARAAATKLSEAVGAALQEPRRQRR. The helical transmembrane segment at 34-54 threads the bilayer; the sequence is LVLVIVCVALLLDNMLYMVIV. The Lumenal, vesicle portion of the chain corresponds to 55 to 125; it reads PIVPDYIAHM…PTESEDVKIG (71 aa). Residues N89 and N96 are each glycosylated (N-linked (GlcNAc...) asparagine). Residues 126–146 form a helical membrane-spanning segment; it reads VLFASKAILQLLVNPLSGPFI. At 147-152 the chain is on the cytoplasmic side; that stretch reads DRMSYD. A helical membrane pass occupies residues 153 to 173; sequence VPLLIGLGVMFASTVLFAFAE. Topologically, residues 174-182 are lumenal, vesicle; the sequence is DYATLFAAR. Residues 183–203 traverse the membrane as a helical segment; sequence SLQGLGSAFADTSGIAMIADK. At 204 to 213 the chain is on the cytoplasmic side; the sequence is YPEEPERSRA. A helical membrane pass occupies residues 214-234; sequence LGVALAFISFGSLVAPPFGGI. At 235–242 the chain is on the lumenal, vesicle side; that stretch reads LYEFAGKR. A helical membrane pass occupies residues 243-263; sequence VPFLVLAAVSLFDALLLLAVA. The Cytoplasmic segment spans residues 264–289; sequence KPFSAAARARANLPVGTPIHRLMLDP. A helical membrane pass occupies residues 290–310; that stretch reads YIAVVAGALTTCNIPLAFLEP. At 311–325 the chain is on the lumenal, vesicle side; the sequence is TIATWMKHTMAASEW. The helical transmembrane segment at 326 to 346 threads the bilayer; sequence EMGMAWLPAFVPHVLGVYLTV. Topologically, residues 347-356 are cytoplasmic; the sequence is RLAARYPHLQ. A helical membrane pass occupies residues 357–377; the sequence is WLYGALGLAVIGASSCIVPAC. Topologically, residues 378-388 are lumenal, vesicle; the sequence is RSFAPLVVSLC. The chain crosses the membrane as a helical span at residues 389–409; sequence GLCFGIALVDTALLPTLAFLV. The Cytoplasmic segment spans residues 410–422; it reads DVRHVSVYGSVYA. The chain crosses the membrane as a helical span at residues 423–443; it reads IADISYSVAYALGPIVAGHIV. Residues 444–447 lie on the Lumenal, vesicle side of the membrane; the sequence is HSLG. Residues 448 to 468 traverse the membrane as a helical segment; that stretch reads FEQLSLGMGLANLLYAPVLLL. The Cytoplasmic segment spans residues 469–532; the sequence is LRNVGLLTRS…DDYNYYYTRS (64 aa). The segment at 471–532 is mediates interaction with SEC14L1; sequence NVGLLTRSRS…DDYNYYYTRS (62 aa). Residues 502-523 form a disordered region; that stretch reads RPVSGQDGEPRSPPGPFDACED.

Belongs to the major facilitator superfamily. Vesicular transporter family. As to quaternary structure, interacts with SEC14L1. In terms of tissue distribution, peripheral and central cholinergic nervous systems.

It is found in the cytoplasmic vesicle. The protein resides in the secretory vesicle. The protein localises to the synaptic vesicle membrane. The enzyme catalyses acetylcholine(out) + 2 H(+)(in) = acetylcholine(in) + 2 H(+)(out). The catalysed reaction is choline(in) + 2 H(+)(out) = choline(out) + 2 H(+)(in). It catalyses the reaction serotonin(in) + 2 H(+)(out) = serotonin(out) + 2 H(+)(in). With respect to regulation, potently inhibited by L-vesamicol, reserpine and tetrabenazine. Its function is as follows. Electrogenic antiporter that exchanges one cholinergic neurotransmitter, acetylcholine or choline, with two intravesicular protons across the membrane of synaptic vesicles. Uses the electrochemical proton gradient established by the V-type proton-pump ATPase to store neurotransmitters inside the vesicles prior to their release via exocytosis. Determines cholinergic vesicular quantal size at presynaptic nerve terminals in developing neuro-muscular junctions with an impact on motor neuron differentiation and innervation pattern. Part of forebrain cholinergic system, regulates hippocampal synapse transmissions that underlie spatial memory formation. Can transport serotonin. This is Vesicular acetylcholine transporter (SLC18A3) from Homo sapiens (Human).